Reading from the N-terminus, the 251-residue chain is Ubiquinone/menaquinone biosynthesis C-methyltransferase UbiE (251 aa).

Residues threonine 74, aspartate 95, and 123–124 (NA) contribute to the S-adenosyl-L-methionine site.

It belongs to the class I-like SAM-binding methyltransferase superfamily. MenG/UbiE family.

The catalysed reaction is a 2-demethylmenaquinol + S-adenosyl-L-methionine = a menaquinol + S-adenosyl-L-homocysteine + H(+). It catalyses the reaction a 2-methoxy-6-(all-trans-polyprenyl)benzene-1,4-diol + S-adenosyl-L-methionine = a 5-methoxy-2-methyl-3-(all-trans-polyprenyl)benzene-1,4-diol + S-adenosyl-L-homocysteine + H(+). It functions in the pathway quinol/quinone metabolism; menaquinone biosynthesis; menaquinol from 1,4-dihydroxy-2-naphthoate: step 2/2. It participates in cofactor biosynthesis; ubiquinone biosynthesis. Its function is as follows. Methyltransferase required for the conversion of demethylmenaquinol (DMKH2) to menaquinol (MKH2) and the conversion of 2-polyprenyl-6-methoxy-1,4-benzoquinol (DDMQH2) to 2-polyprenyl-3-methyl-6-methoxy-1,4-benzoquinol (DMQH2). The chain is Ubiquinone/menaquinone biosynthesis C-methyltransferase UbiE from Shewanella sp. (strain ANA-3).